The sequence spans 63 residues: Cytochrome c oxidase subunit 7C, mitochondrial (63 aa).

A mitochondrion-targeting transit peptide spans 1–16 (MLGQSIRRFTTSVVRR). The Mitochondrial matrix portion of the chain corresponds to 17-33 (SHYEEGPGKNLPFSVEN). Residue Lys-25 is modified to N6-acetyllysine; alternate. Position 25 is an N6-succinyllysine; alternate (Lys-25). A helical transmembrane segment spans residues 34–60 (KWSLLAKMCLYFGSAFATPFLVVRHQL). Over 61–63 (LKT) the chain is Mitochondrial intermembrane.

It belongs to the cytochrome c oxidase VIIc family. In terms of assembly, component of the cytochrome c oxidase (complex IV, CIV), a multisubunit enzyme composed of 14 subunits. The complex is composed of a catalytic core of 3 subunits MT-CO1, MT-CO2 and MT-CO3, encoded in the mitochondrial DNA, and 11 supernumerary subunits COX4I1 (or COX4I2), COX5A, COX5B, COX6A1 (or COX6A2), COX6B1 (or COX6B2), COX6C, COX7A2 (or COX7A1), COX7B, COX7C, COX8A and NDUFA4, which are encoded in the nuclear genome. The complex exists as a monomer or a dimer and forms supercomplexes (SCs) in the inner mitochondrial membrane with NADH-ubiquinone oxidoreductase (complex I, CI) and ubiquinol-cytochrome c oxidoreductase (cytochrome b-c1 complex, complex III, CIII), resulting in different assemblies (supercomplex SCI(1)III(2)IV(1) and megacomplex MCI(2)III(2)IV(2)). Interacts with RAB5IF.

The protein resides in the mitochondrion inner membrane. The protein operates within energy metabolism; oxidative phosphorylation. Its function is as follows. Component of the cytochrome c oxidase, the last enzyme in the mitochondrial electron transport chain which drives oxidative phosphorylation. The respiratory chain contains 3 multisubunit complexes succinate dehydrogenase (complex II, CII), ubiquinol-cytochrome c oxidoreductase (cytochrome b-c1 complex, complex III, CIII) and cytochrome c oxidase (complex IV, CIV), that cooperate to transfer electrons derived from NADH and succinate to molecular oxygen, creating an electrochemical gradient over the inner membrane that drives transmembrane transport and the ATP synthase. Cytochrome c oxidase is the component of the respiratory chain that catalyzes the reduction of oxygen to water. Electrons originating from reduced cytochrome c in the intermembrane space (IMS) are transferred via the dinuclear copper A center (CU(A)) of subunit 2 and heme A of subunit 1 to the active site in subunit 1, a binuclear center (BNC) formed by heme A3 and copper B (CU(B)). The BNC reduces molecular oxygen to 2 water molecules using 4 electrons from cytochrome c in the IMS and 4 protons from the mitochondrial matrix. The polypeptide is Cytochrome c oxidase subunit 7C, mitochondrial (COX7C) (Homo sapiens (Human)).